Here is a 367-residue protein sequence, read N- to C-terminus: Heme A synthase (367 aa).

5 helical membrane passes run Gly-12–Gly-32, Leu-99–Gly-119, Leu-127–Val-147, Leu-163–Gly-183, and Ala-198–Ala-218. His-264 provides a ligand contact to heme. Helical transmembrane passes span Val-266 to Gly-286, Gly-296 to Val-316, and Pro-317 to Val-337. Position 324 (His-324) interacts with heme.

This sequence belongs to the COX15/CtaA family. Type 2 subfamily. As to quaternary structure, interacts with CtaB. It depends on heme b as a cofactor.

It is found in the cell membrane. The catalysed reaction is Fe(II)-heme o + 2 A + H2O = Fe(II)-heme a + 2 AH2. It participates in porphyrin-containing compound metabolism; heme A biosynthesis; heme A from heme O: step 1/1. Catalyzes the conversion of heme O to heme A by two successive hydroxylations of the methyl group at C8. The first hydroxylation forms heme I, the second hydroxylation results in an unstable dihydroxymethyl group, which spontaneously dehydrates, resulting in the formyl group of heme A. The chain is Heme A synthase from Methylobacterium radiotolerans (strain ATCC 27329 / DSM 1819 / JCM 2831 / NBRC 15690 / NCIMB 10815 / 0-1).